A 298-amino-acid polypeptide reads, in one-letter code: tRNA dimethylallyltransferase (298 aa).

Position 10–17 (10–17) interacts with ATP; the sequence is GPTASGKT. A substrate-binding site is contributed by 12–17; the sequence is TASGKT. The interval 35–38 is interaction with substrate tRNA; it reads DSMC.

The protein belongs to the IPP transferase family. As to quaternary structure, monomer. The cofactor is Mg(2+).

It carries out the reaction adenosine(37) in tRNA + dimethylallyl diphosphate = N(6)-dimethylallyladenosine(37) in tRNA + diphosphate. In terms of biological role, catalyzes the transfer of a dimethylallyl group onto the adenine at position 37 in tRNAs that read codons beginning with uridine, leading to the formation of N6-(dimethylallyl)adenosine (i(6)A). The chain is tRNA dimethylallyltransferase from Hydrogenobaculum sp. (strain Y04AAS1).